The sequence spans 246 residues: AA9 family lytic polysaccharide monooxygenase D (246 aa).

An N-terminal signal peptide occupies residues 1–19 (MHLLSLLFPVIALIPTVLS). Residue histidine 20 participates in Cu(2+) binding. Cysteine 78 and cysteine 196 are disulfide-bonded. N-linked (GlcNAc...) asparagine glycosylation is found at asparagine 86, asparagine 141, and asparagine 156. Positions 182 and 191 each coordinate O2. Tyrosine 193 serves as a coordination point for Cu(2+). A glycan (N-linked (GlcNAc...) asparagine) is linked at asparagine 235.

It belongs to the polysaccharide monooxygenase AA9 family. The cofactor is Cu(2+).

The protein localises to the secreted. The catalysed reaction is [(1-&gt;4)-beta-D-glucosyl]n+m + reduced acceptor + O2 = 4-dehydro-beta-D-glucosyl-[(1-&gt;4)-beta-D-glucosyl]n-1 + [(1-&gt;4)-beta-D-glucosyl]m + acceptor + H2O.. In terms of biological role, lytic polysaccharide monooxygenase (LPMO) that depolymerizes crystalline and amorphous polysaccharides via the oxidation of scissile alpha- or beta-(1-4)-glycosidic bonds, yielding C1 and C4 oxidation products. Catalysis by LPMOs requires the reduction of the active-site copper from Cu(II) to Cu(I) by a reducing agent and H(2)O(2) or O(2) as a cosubstrate. The polypeptide is AA9 family lytic polysaccharide monooxygenase D (Botryotinia fuckeliana (strain B05.10) (Noble rot fungus)).